Here is a 510-residue protein sequence, read N- to C-terminus: NAD(P)H-quinone oxidoreductase subunit 2, chloroplastic (510 aa).

Helical transmembrane passes span 24–44 (LLLF…GLIL), 59–79 (WFYF…LFRW), 99–119 (IFQF…VEYI), 124–144 (MAIT…MFLC), 149–169 (LITI…LSGY), 184–204 (LLMG…LYGL), 229–249 (ISIA…PAPF), 295–315 (WHLL…LIAI), 323–343 (MLAY…IVGD), 347–367 (GYAS…GTFA), 395–415 (ALSL…AGFF), and 418–438 (LHLF…IGLL).

This sequence belongs to the complex I subunit 2 family. In terms of assembly, NDH is composed of at least 16 different subunits, 5 of which are encoded in the nucleus.

It is found in the plastid. It localises to the chloroplast thylakoid membrane. It carries out the reaction a plastoquinone + NADH + (n+1) H(+)(in) = a plastoquinol + NAD(+) + n H(+)(out). The catalysed reaction is a plastoquinone + NADPH + (n+1) H(+)(in) = a plastoquinol + NADP(+) + n H(+)(out). Functionally, NDH shuttles electrons from NAD(P)H:plastoquinone, via FMN and iron-sulfur (Fe-S) centers, to quinones in the photosynthetic chain and possibly in a chloroplast respiratory chain. The immediate electron acceptor for the enzyme in this species is believed to be plastoquinone. Couples the redox reaction to proton translocation, and thus conserves the redox energy in a proton gradient. The chain is NAD(P)H-quinone oxidoreductase subunit 2, chloroplastic from Muilla maritima (Sea muilla).